Consider the following 355-residue polypeptide: Probable dual-specificity RNA methyltransferase RlmN (355 aa).

E107 serves as the catalytic Proton acceptor. The region spanning T113–E341 is the Radical SAM core domain. C120 and C346 are joined by a disulfide. [4Fe-4S] cluster-binding residues include C127, C131, and C134. S-adenosyl-L-methionine-binding positions include G174–E175, S204, S227–H229, and N303. C346 serves as the catalytic S-methylcysteine intermediate.

This sequence belongs to the radical SAM superfamily. RlmN family. The cofactor is [4Fe-4S] cluster.

It localises to the cytoplasm. It carries out the reaction adenosine(2503) in 23S rRNA + 2 reduced [2Fe-2S]-[ferredoxin] + 2 S-adenosyl-L-methionine = 2-methyladenosine(2503) in 23S rRNA + 5'-deoxyadenosine + L-methionine + 2 oxidized [2Fe-2S]-[ferredoxin] + S-adenosyl-L-homocysteine. The catalysed reaction is adenosine(37) in tRNA + 2 reduced [2Fe-2S]-[ferredoxin] + 2 S-adenosyl-L-methionine = 2-methyladenosine(37) in tRNA + 5'-deoxyadenosine + L-methionine + 2 oxidized [2Fe-2S]-[ferredoxin] + S-adenosyl-L-homocysteine. Specifically methylates position 2 of adenine 2503 in 23S rRNA and position 2 of adenine 37 in tRNAs. This is Probable dual-specificity RNA methyltransferase RlmN from Trichormus variabilis (strain ATCC 29413 / PCC 7937) (Anabaena variabilis).